The primary structure comprises 431 residues: Histidinol dehydrogenase (431 aa).

Residues Tyr127, Gln189, and Asn212 each coordinate NAD(+). Substrate-binding residues include Ser237, Gln259, and His262. Residues Gln259 and His262 each coordinate Zn(2+). Residues Glu326 and His327 each act as proton acceptor in the active site. Residues His327, Asp360, Glu414, and His419 each contribute to the substrate site. Residue Asp360 participates in Zn(2+) binding. Residue His419 participates in Zn(2+) binding.

This sequence belongs to the histidinol dehydrogenase family. Zn(2+) serves as cofactor.

It catalyses the reaction L-histidinol + 2 NAD(+) + H2O = L-histidine + 2 NADH + 3 H(+). It participates in amino-acid biosynthesis; L-histidine biosynthesis; L-histidine from 5-phospho-alpha-D-ribose 1-diphosphate: step 9/9. Functionally, catalyzes the sequential NAD-dependent oxidations of L-histidinol to L-histidinaldehyde and then to L-histidine. This is Histidinol dehydrogenase from Xylella fastidiosa (strain Temecula1 / ATCC 700964).